The primary structure comprises 495 residues: Growth/differentiation factor 5 (495 aa).

A signal peptide spans 1-27 (MRLPKLLTLLLWHLAWLDLELICTVLG). Residues 28-375 (APDLGQRTPG…YLFSQRRKRR (348 aa)) constitute a propeptide that is removed on maturation. The interval 30–162 (DLGQRTPGAK…KEPFRPPPIT (133 aa)) is disordered. A compositionally biased stretch (low complexity) spans 124–137 (GGKASSKAGSAPSS). The span at 142–156 (KTREPGTPREPKEPF) shows a compositional bias: basic and acidic residues. Asn-183 carries an N-linked (GlcNAc...) asparagine glycan. 3 disulfide bridges follow: Cys-394–Cys-460, Cys-423–Cys-492, and Cys-427–Cys-494.

Belongs to the TGF-beta family. As to quaternary structure, homodimer; disulfide-linked. Interacts with serine proteases, HTRA1 and HTRA3. Following LPS binding, may form a complex with CXCR4, HSP90AA1 and HSPA8. Interacts with high affinity with NOG; inhibits chondrogenesis. Interacts with high affinity with BMPR1B and lower affinity with BMPR1A; positively regulates chondrocyte differentiation and induces SMAD-dependent signaling. Interacts with FBN1 (via N-terminal domain) and FBN2. Interacts with TGFBR3.

It localises to the secreted. The protein localises to the cell membrane. Its function is as follows. Growth factor involved in bone and cartilage formation. During cartilage development regulates differentiation of chondrogenic tissue through two pathways. Firstly, positively regulates differentiation of chondrogenic tissue through its binding of high affinity with BMPR1B and of less affinity with BMPR1A, leading to induction of SMAD1-SMAD5-SMAD8 complex phosphorylation and then SMAD protein signaling transduction. Secondly, negatively regulates chondrogenic differentiation through its interaction with NOG. Required to prevent excessive muscle loss upon denervation. This function requires SMAD4 and is mediated by phosphorylated SMAD1/5/8. Binds bacterial lipopolysaccharide (LPS) and mediates LPS-induced inflammatory response, including TNF secretion by monocytes. In Mus musculus (Mouse), this protein is Growth/differentiation factor 5 (Gdf5).